The sequence spans 539 residues: Chaperone Ric-8A (539 aa).

Belongs to the synembryn family.

It is found in the cytoplasm. It localises to the cell cortex. Functionally, chaperone that specifically binds and folds nascent G alpha proteins prior to G protein heterotrimer formation, promoting their stability and activity: folds GNAI1, GNAO1, GNA13 and GNAQ. Does not fold G(s) G-alpha proteins GNAS nor GNAL. Also acts as a guanine nucleotide exchange factor (GEF) for G alpha proteins by stimulating exchange of bound GDP for free GTP. This Xenopus tropicalis (Western clawed frog) protein is Chaperone Ric-8A (ric8a).